A 258-amino-acid chain; its full sequence is tRNA pseudouridine synthase A (258 aa).

Residue D52 is the Nucleophile of the active site. Residue Y110 coordinates substrate.

This sequence belongs to the tRNA pseudouridine synthase TruA family. As to quaternary structure, homodimer.

The catalysed reaction is uridine(38/39/40) in tRNA = pseudouridine(38/39/40) in tRNA. Its function is as follows. Formation of pseudouridine at positions 38, 39 and 40 in the anticodon stem and loop of transfer RNAs. The sequence is that of tRNA pseudouridine synthase A from Francisella tularensis subsp. holarctica (strain FTNF002-00 / FTA).